Consider the following 161-residue polypeptide: Nucleotide-binding protein swp_1151 (161 aa).

This sequence belongs to the YajQ family.

Functionally, nucleotide-binding protein. This chain is Nucleotide-binding protein swp_1151, found in Shewanella piezotolerans (strain WP3 / JCM 13877).